The primary structure comprises 543 residues: Chaperonin GroEL 1 (543 aa).

Residues 29-32 (TLGP), 86-90 (DGTTT), G413, 479-481 (NAA), and D495 each bind ATP. Residues 524-543 (PEPKDAAPAGVGGGGGDFDY) form a disordered region. The segment covering 533 to 543 (GVGGGGGDFDY) has biased composition (gly residues).

The protein belongs to the chaperonin (HSP60) family. As to quaternary structure, forms a cylinder of 14 subunits composed of two heptameric rings stacked back-to-back. Interacts with the co-chaperonin GroES.

Its subcellular location is the cytoplasm. It catalyses the reaction ATP + H2O + a folded polypeptide = ADP + phosphate + an unfolded polypeptide.. Together with its co-chaperonin GroES, plays an essential role in assisting protein folding. The GroEL-GroES system forms a nano-cage that allows encapsulation of the non-native substrate proteins and provides a physical environment optimized to promote and accelerate protein folding. In Anabaena sp. (strain L31), this protein is Chaperonin GroEL 1.